The chain runs to 294 residues: Formamidopyrimidine-DNA glycosylase (294 aa).

Pro-2 (schiff-base intermediate with DNA) is an active-site residue. The active-site Proton donor is the Glu-3. The active-site Proton donor; for beta-elimination activity is Lys-61. Residues His-104, Arg-123, and Lys-169 each contribute to the DNA site. The FPG-type zinc-finger motif lies at Ala-255–Pro-289. Arg-279 serves as the catalytic Proton donor; for delta-elimination activity.

It belongs to the FPG family. In terms of assembly, monomer. Zn(2+) serves as cofactor.

The enzyme catalyses Hydrolysis of DNA containing ring-opened 7-methylguanine residues, releasing 2,6-diamino-4-hydroxy-5-(N-methyl)formamidopyrimidine.. The catalysed reaction is 2'-deoxyribonucleotide-(2'-deoxyribose 5'-phosphate)-2'-deoxyribonucleotide-DNA = a 3'-end 2'-deoxyribonucleotide-(2,3-dehydro-2,3-deoxyribose 5'-phosphate)-DNA + a 5'-end 5'-phospho-2'-deoxyribonucleoside-DNA + H(+). Involved in base excision repair of DNA damaged by oxidation or by mutagenic agents. Acts as a DNA glycosylase that recognizes and removes damaged bases. Has a preference for oxidized purines, such as 7,8-dihydro-8-oxoguanine (8-oxoG). Has AP (apurinic/apyrimidinic) lyase activity and introduces nicks in the DNA strand. Cleaves the DNA backbone by beta-delta elimination to generate a single-strand break at the site of the removed base with both 3'- and 5'-phosphates. This Nocardia farcinica (strain IFM 10152) protein is Formamidopyrimidine-DNA glycosylase.